The primary structure comprises 357 residues: tRNA-specific 2-thiouridylase MnmA (357 aa).

ATP contacts are provided by residues 6–13 (AMSGGVDS) and L32. C101 serves as the catalytic Nucleophile. C101 and C193 are disulfide-bonded. Residue G125 coordinates ATP. The tract at residues 143 to 145 (KDQ) is interaction with tRNA. C193 (cysteine persulfide intermediate) is an active-site residue.

It belongs to the MnmA/TRMU family.

Its subcellular location is the cytoplasm. The catalysed reaction is S-sulfanyl-L-cysteinyl-[protein] + uridine(34) in tRNA + AH2 + ATP = 2-thiouridine(34) in tRNA + L-cysteinyl-[protein] + A + AMP + diphosphate + H(+). Catalyzes the 2-thiolation of uridine at the wobble position (U34) of tRNA, leading to the formation of s(2)U34. The protein is tRNA-specific 2-thiouridylase MnmA of Mycolicibacterium vanbaalenii (strain DSM 7251 / JCM 13017 / BCRC 16820 / KCTC 9966 / NRRL B-24157 / PYR-1) (Mycobacterium vanbaalenii).